Reading from the N-terminus, the 264-residue chain is Thymidylate synthase (264 aa).

A dUMP-binding site is contributed by Arg-21. (6R)-5,10-methylene-5,6,7,8-tetrahydrofolate is bound at residue His-51. 126 to 127 is a dUMP binding site; sequence RR. The active-site Nucleophile is the Cys-146. Residues 166-169, Asn-177, and 207-209 each bind dUMP; these read RSGD and HIY. (6R)-5,10-methylene-5,6,7,8-tetrahydrofolate is bound at residue Asp-169. Position 263 (Ala-263) interacts with (6R)-5,10-methylene-5,6,7,8-tetrahydrofolate.

It belongs to the thymidylate synthase family. Bacterial-type ThyA subfamily. As to quaternary structure, homodimer.

It localises to the cytoplasm. It carries out the reaction dUMP + (6R)-5,10-methylene-5,6,7,8-tetrahydrofolate = 7,8-dihydrofolate + dTMP. Its pathway is pyrimidine metabolism; dTTP biosynthesis. Functionally, catalyzes the reductive methylation of 2'-deoxyuridine-5'-monophosphate (dUMP) to 2'-deoxythymidine-5'-monophosphate (dTMP) while utilizing 5,10-methylenetetrahydrofolate (mTHF) as the methyl donor and reductant in the reaction, yielding dihydrofolate (DHF) as a by-product. This enzymatic reaction provides an intracellular de novo source of dTMP, an essential precursor for DNA biosynthesis. The protein is Thymidylate synthase of Sinorhizobium medicae (strain WSM419) (Ensifer medicae).